Consider the following 595-residue polypeptide: MAGAIASRMSFSSLKRKQPKTFTVRIVTMDAEMEFNCEMKWKGKDLFDLVCRTLGLRETWFFGLQYTIKDTVAWLKMDKKVLDHDVSKEEPVTFHFLAKFYPENAEEELVQEITQHLFFLQVKKQILDEKIYCPPEASVLLASYAVQAKYGDYDPSVHKRGFLAQEELLPKRVINLYQMTPEMWEERITAWYAEHRGRARDEAEMEYLKIAQDLEMYGVNYFAIRNKKGTELLLGVDALGLHIYDPENRLTPKISFPWNEIRNISYSDKEFTIKPLDKKIDVFKFNSSKLRVNKLILQLCIGNHDLFMRRRKADSLEVQQMKAQAREEKARKQMERQRLAREKQMREEAERTRDELERRLLQMKEEATMANEALMRSEETADLLAEKAQITEEEAKLLAQKAAEAEQEMQRIKATAIRTEEEKRLMEQKVLEAEVLALKMAEESERRAKEADQLKQDLQEAREAERRAKQKLLEIATKPTYPPMNPIPAPLPPDIPSFSLIGDSLSFDFKDTDMKRLSMEIEKEKVEYMEKSKHLQEQLNELKTEIEALKLKERETALDILHNENSDRGGSSKHNTIKKLTLQSAKSRVAFFEEL.

S13 bears the Phosphoserine mark. In terms of domain architecture, FERM spans 22 to 311 (FTVRIVTMDA…GNHDLFMRRR (290 aa)). At S518 the chain carries Phosphoserine; by PAK.

In terms of assembly, interacts with NHERF1, HGS and AGAP2. Interacts with SGSM3. Interacts (via FERM domain) with MPP1. Interacts with LAYN and WWC1. Interacts with the CUL4A-RBX1-DDB1-VprBP/DCAF1 E3 ubiquitin-protein ligase complex. The unphosphorylated form interacts (via FERM domain) with VPRBP/DCAF1. Interacts (via FERM domain) with NOP53; the interaction is direct. Interacts with SCHIP1; the interaction is direct. Phosphorylation of Ser-518 inhibits nuclear localization by disrupting the intramolecular association of the FERM domain with the C-terminal tail. Post-translationally, ubiquitinated by the CUL4A-RBX1-DDB1-DCAF1/VprBP E3 ubiquitin-protein ligase complex for ubiquitination and subsequent proteasome-dependent degradation. In terms of processing, phosphorylation of Ser-518 inhibits nuclear localization by disrupting the intramolecular association of the FERM domain with the C-terminal tail. The dephosphorylation of Ser-518 favors the interaction with NOP53.

The protein resides in the cell membrane. It is found in the cell projection. It localises to the cytoplasm. The protein localises to the cytoskeleton. Its subcellular location is the nucleus. In terms of biological role, probable regulator of the Hippo/SWH (Sav/Wts/Hpo) signaling pathway, a signaling pathway that plays a pivotal role in tumor suppression by restricting proliferation and promoting apoptosis. Along with WWC1 can synergistically induce the phosphorylation of LATS1 and LATS2 and can probably function in the regulation of the Hippo/SWH (Sav/Wts/Hpo) signaling pathway. May act as a membrane stabilizing protein. May inhibit PI3 kinase by binding to AGAP2 and impairing its stimulating activity. Suppresses cell proliferation and tumorigenesis by inhibiting the CUL4A-RBX1-DDB1-VprBP/DCAF1 E3 ubiquitin-protein ligase complex. The chain is Merlin (NF2) from Papio anubis (Olive baboon).